A 412-amino-acid polypeptide reads, in one-letter code: Probable inactive allantoicase (412 aa).

Belongs to the allantoicase family.

Its function is as follows. The function of this enzyme is unclear as allantoicase activity is not known to exist in mammals. The protein is Probable inactive allantoicase (ALLC) of Bos taurus (Bovine).